The sequence spans 33 residues: Brevinin-2DYd (33 aa).

Cysteine 27 and cysteine 33 are oxidised to a cystine.

Expressed by the skin glands.

It localises to the secreted. In terms of biological role, antimicrobial peptide. A mixture of Brevinin-2DYc/2DYd is active against the Gram-positive bacterium S.aureus (MIC=15 uM) and the Gram-negative bacterium E.coli (MIC=15 uM). In Rana dybowskii (Dybovsky's frog), this protein is Brevinin-2DYd.